The sequence spans 234 residues: uncharacterized protein (234 aa).

The disordered stretch occupies residues 199 to 234 (DNQNEPLENYSDDNNFSNFDETEHVDDSEMNDDNFI).

This is an uncharacterized protein from Buchnera aphidicola subsp. Schizaphis graminum (strain Sg).